The primary structure comprises 271 residues: S-adenosylmethionine decarboxylase proenzyme (271 aa).

S121 (schiff-base intermediate with substrate; via pyruvic acid) is an active-site residue. Residue S121 is modified to Pyruvic acid (Ser); by autocatalysis. The active-site Proton acceptor; for processing activity is H126. The active-site Proton donor; for catalytic activity is C149.

This sequence belongs to the prokaryotic AdoMetDC family. Type 2 subfamily. In terms of assembly, heterooctamer of four alpha and four beta chains arranged as a tetramer of alpha/beta heterodimers. Pyruvate is required as a cofactor. Is synthesized initially as an inactive proenzyme. Formation of the active enzyme involves a self-maturation process in which the active site pyruvoyl group is generated from an internal serine residue via an autocatalytic post-translational modification. Two non-identical subunits are generated from the proenzyme in this reaction, and the pyruvate is formed at the N-terminus of the alpha chain, which is derived from the carboxyl end of the proenzyme. The post-translation cleavage follows an unusual pathway, termed non-hydrolytic serinolysis, in which the side chain hydroxyl group of the serine supplies its oxygen atom to form the C-terminus of the beta chain, while the remainder of the serine residue undergoes an oxidative deamination to produce ammonia and the pyruvoyl group blocking the N-terminus of the alpha chain.

It catalyses the reaction S-adenosyl-L-methionine + H(+) = S-adenosyl 3-(methylsulfanyl)propylamine + CO2. It participates in amine and polyamine biosynthesis; S-adenosylmethioninamine biosynthesis; S-adenosylmethioninamine from S-adenosyl-L-methionine: step 1/1. Its function is as follows. Catalyzes the decarboxylation of S-adenosylmethionine to S-adenosylmethioninamine (dcAdoMet), the propylamine donor required for the synthesis of the polyamines spermine and spermidine from the diamine putrescine. The polypeptide is S-adenosylmethionine decarboxylase proenzyme (Clostridium perfringens (strain SM101 / Type A)).